A 362-amino-acid chain; its full sequence is Phosphoserine aminotransferase (362 aa).

L-glutamate-binding residues include Ser9 and Arg42. Pyridoxal 5'-phosphate is bound by residues 76–77, Trp102, Thr153, Asp174, and Gln197; that span reads GR. Residue Lys198 is modified to N6-(pyridoxal phosphate)lysine. 239–240 contributes to the pyridoxal 5'-phosphate binding site; the sequence is NT.

Belongs to the class-V pyridoxal-phosphate-dependent aminotransferase family. SerC subfamily. Homodimer. Pyridoxal 5'-phosphate serves as cofactor.

It localises to the cytoplasm. It catalyses the reaction O-phospho-L-serine + 2-oxoglutarate = 3-phosphooxypyruvate + L-glutamate. The catalysed reaction is 4-(phosphooxy)-L-threonine + 2-oxoglutarate = (R)-3-hydroxy-2-oxo-4-phosphooxybutanoate + L-glutamate. The protein operates within amino-acid biosynthesis; L-serine biosynthesis; L-serine from 3-phospho-D-glycerate: step 2/3. It participates in cofactor biosynthesis; pyridoxine 5'-phosphate biosynthesis; pyridoxine 5'-phosphate from D-erythrose 4-phosphate: step 3/5. Its function is as follows. Catalyzes the reversible conversion of 3-phosphohydroxypyruvate to phosphoserine and of 3-hydroxy-2-oxo-4-phosphonooxybutanoate to phosphohydroxythreonine. Is involved in both pyridoxine and serine biosynthesis. The chain is Phosphoserine aminotransferase (serC) from Escherichia coli (strain K12).